A 187-amino-acid chain; its full sequence is Troponin I, slow skeletal muscle (187 aa).

Residue Pro2 is modified to N-acetylproline. An involved in binding TNC region spans residues Pro2 to Arg48. Residue Ser58 is modified to Phosphoserine. The tract at residues Leu97–Val118 is involved in binding TNC and actin.

It belongs to the troponin I family. Binds to actin and tropomyosin.

Its function is as follows. Troponin I is the inhibitory subunit of troponin, the thin filament regulatory complex which confers calcium-sensitivity to striated muscle actomyosin ATPase activity. This chain is Troponin I, slow skeletal muscle (Tnni1), found in Rattus norvegicus (Rat).